The sequence spans 549 residues: Cation/acetate symporter ActP (549 aa).

A run of 13 helical transmembrane segments spans residues 33 to 53 (WQAIIMFLIFVVFTLGITYWA), 77 to 97 (LAIAGDYMSAASFLGISALVF), 103 to 123 (GLIYSLGFLVGWPIILFLIAE), 148 to 168 (ILSACGSLVVVALYLIAQMVG), 183 to 203 (IAVVLVGVLMMMYVLFGGMLA), 206 to 226 (WVQIIKAVLLLFGASFMAFMV), 262 to 282 (ISALSLGLGLMFGTAGLPHIL), 303 to 323 (GFMGYFYILTFIIGFGAIMLV), 355 to 375 (LFLGFISAVAFATILAVVAGL), 404 to 424 (VSKITVLVLGVIAIILGFLFE), 428 to 448 (IAFMVGLAFAIAASCNFPIIL), 464 to 484 (GGWLGLLTAVVLMILGPTIWV), and 493 to 513 (IFPYEYPALFSISVAFLGIWF).

The protein belongs to the sodium:solute symporter (SSF) (TC 2.A.21) family.

It is found in the cell inner membrane. Its function is as follows. Transports acetate. The sequence is that of Cation/acetate symporter ActP from Salmonella paratyphi C (strain RKS4594).